The sequence spans 424 residues: Protein-glutamate methylesterase/protein-glutamine glutaminase (424 aa).

A Response regulatory domain is found at 6 to 123; that stretch reads RVLVVDDSAF…SLDDFTRQLT (118 aa). Asp57 is subject to 4-aspartylphosphate. The interval 177-210 is disordered; that stretch reads SRLSPGRSPGGKEGVAGAVSAGSTRGEAIRPGKG. The CheB-type methylesterase domain occupies 229 to 423; that stretch reads RRPGIEVVAI…PAIVALVTGA (195 aa). Residues Ser241, His268, and Asp365 contribute to the active site.

It belongs to the CheB family. Phosphorylated by CheA. Phosphorylation of the N-terminal regulatory domain activates the methylesterase activity.

The protein localises to the cytoplasm. The catalysed reaction is [protein]-L-glutamate 5-O-methyl ester + H2O = L-glutamyl-[protein] + methanol + H(+). The enzyme catalyses L-glutaminyl-[protein] + H2O = L-glutamyl-[protein] + NH4(+). Its function is as follows. Involved in chemotaxis. Part of a chemotaxis signal transduction system that modulates chemotaxis in response to various stimuli. Catalyzes the demethylation of specific methylglutamate residues introduced into the chemoreceptors (methyl-accepting chemotaxis proteins or MCP) by CheR. Also mediates the irreversible deamidation of specific glutamine residues to glutamic acid. This is Protein-glutamate methylesterase/protein-glutamine glutaminase from Moorella thermoacetica (strain ATCC 39073 / JCM 9320).